The sequence spans 486 residues: MATFKDACYQYKKLNKLNNAVLKLGANDVWRPSTLTKCKGWCLDCCQYTDLTYCQGCLIYHVCEWCSQYSRCFLDDNPHLLRMRTFRNEITKDDLENLINMYNTLFPINQKIVHKFANIIKQHKCRNEYLTQRYNHFLMPITLQSLSIELDGDIYYIFGYYDDMHKINQTPFSFTNLISKYDILLLDSINFDRMAFLPLTLQQEYALRYFSKSRFITEKRKCIKISHFSDNILDNLHDPNFTLQVIRNCSNMSVEWNEACNLIRNINDYFDILKSSRTEFYDISPRCRMFTQYKLKIASKLIKPNYVASNHNSLATEVHNCKWCSINNNSIVWDDFRIKNVYNDIFNFIRALVKSNLYVGHCSSEEKIYESVKDVLNVCKENEWNILVTEMFNQLEPIKLNDNNYILLNYEINWNVMNVLINSIGKVPKILTLSDVILILRIIIYDWFDIRFMRNTPMTTFTVNKLKQLYEKDRPAEHDSGVSDVE.

The tract at residues 1-81 (MATFKDACYQ…CFLDDNPHLL (81 aa)) is RNA-binding. The zinc-binding domain stretch occupies residues 42-79 (CLDCCQYTDLTYCQGCLIYHVCEWCSQYSRCFLDDNPH). The tract at residues 82–176 (RMRTFRNEIT…INQTPFSFTN (95 aa)) is important for cytoskeleton localization. Residues 317 to 486 (EVHNCKWCSI…EHDSGVSDVE (170 aa)) are interaction with host IRF3. The short motif at 479–483 (DSGVS) is the IKBKB-like degron (ILD) motif element. The pLxIS motif signature appears at 480–483 (SGVS).

The protein belongs to the rotavirus NSP1 family. Interacts (via C-terminus) with host IRF3; this interaction leads to IRF3 degradation. Interacts with host IRF7; this interaction leads to IRF7 degradation. Interacts with host CUL1 and CUL3. Interacts with host BTRC. The C-terminal region is phosphorylated by host CKII/CSNK2A1. Phosphorylation of the DSGXS motif is essential for host NF-kappa-B inhibition.

The protein resides in the host cytoplasm. It is found in the host cytoskeleton. Functionally, plays a role in the inhibition of host innate immunity by inducing the degradation of key host factors required to activate interferon production such as IRF3, IRF5 or IRF7. Associates with components of cullin RING ligases (CRLs) including CUL1 or CUL3, which are essential multisubunit ubiquitination complexes, to modulate their activities. Recognizes the host NF-kappa-B regulator BTRC through the presence of a DSGXS motif in the C-terminal substrate recognition domain. This Rotavirus A (strain RVA/Human/Philippines/L26/1987/G12P1B[4]) (RV-A) protein is Non-structural protein 1.